A 267-amino-acid polypeptide reads, in one-letter code: NAD-capped RNA hydrolase NudC (267 aa).

Residue Arg70 participates in substrate binding. Residues Cys99 and Cys102 each coordinate Zn(2+). Glu112 contributes to the substrate binding site. Residues Cys117 and Cys122 each contribute to the Zn(2+) site. Tyr127 is a substrate binding site. The region spanning 128 to 257 (PVICPSIIVA…TIARALIEAT (130 aa)) is the Nudix hydrolase domain. Residues Ala166, Glu182, and Glu186 each coordinate a divalent metal cation. Positions 167 to 188 (GFVEVGESFEQTIHREVFEETG) match the Nudix box motif. Residue 200–207 (QPWAFPNS) participates in substrate binding. Glu227 is an a divalent metal cation binding site. Ala250 contacts substrate.

The protein belongs to the Nudix hydrolase family. NudC subfamily. Homodimer. The cofactor is Mg(2+). It depends on Mn(2+) as a cofactor. Zn(2+) serves as cofactor.

The catalysed reaction is a 5'-end NAD(+)-phospho-ribonucleoside in mRNA + H2O = a 5'-end phospho-adenosine-phospho-ribonucleoside in mRNA + beta-nicotinamide D-ribonucleotide + 2 H(+). It catalyses the reaction NAD(+) + H2O = beta-nicotinamide D-ribonucleotide + AMP + 2 H(+). The enzyme catalyses NADH + H2O = reduced beta-nicotinamide D-ribonucleotide + AMP + 2 H(+). In terms of biological role, mRNA decapping enzyme that specifically removes the nicotinamide adenine dinucleotide (NAD) cap from a subset of mRNAs by hydrolyzing the diphosphate linkage to produce nicotinamide mononucleotide (NMN) and 5' monophosphate mRNA. The NAD-cap is present at the 5'-end of some mRNAs and stabilizes RNA against 5'-processing. Has preference for mRNAs with a 5'-end purine. Catalyzes the hydrolysis of a broad range of dinucleotide pyrophosphates. This chain is NAD-capped RNA hydrolase NudC, found in Mannheimia succiniciproducens (strain KCTC 0769BP / MBEL55E).